The chain runs to 753 residues: 5-methyltetrahydropteroyltriglutamate--homocysteine methyltransferase (753 aa).

5-methyltetrahydropteroyltri-L-glutamate is bound by residues 17-20 and lysine 117; that span reads RELK. L-homocysteine contacts are provided by residues 431–433 and glutamate 484; that span reads IGS. Residues 431 to 433 and glutamate 484 contribute to the L-methionine site; that span reads IGS. 5-methyltetrahydropteroyltri-L-glutamate contacts are provided by residues 515–516 and tryptophan 561; that span reads RC. An L-homocysteine-binding site is contributed by aspartate 599. Aspartate 599 serves as a coordination point for L-methionine. Glutamate 605 contacts 5-methyltetrahydropteroyltri-L-glutamate. Zn(2+)-binding residues include histidine 641, cysteine 643, and glutamate 665. The Proton donor role is filled by histidine 694. Residue cysteine 726 participates in Zn(2+) binding.

The protein belongs to the vitamin-B12 independent methionine synthase family. The cofactor is Zn(2+).

It carries out the reaction 5-methyltetrahydropteroyltri-L-glutamate + L-homocysteine = tetrahydropteroyltri-L-glutamate + L-methionine. It functions in the pathway amino-acid biosynthesis; L-methionine biosynthesis via de novo pathway; L-methionine from L-homocysteine (MetE route): step 1/1. In terms of biological role, catalyzes the transfer of a methyl group from 5-methyltetrahydrofolate to homocysteine resulting in methionine formation. In Escherichia coli (strain SMS-3-5 / SECEC), this protein is 5-methyltetrahydropteroyltriglutamate--homocysteine methyltransferase.